The chain runs to 395 residues: MDEEPERTKRWEGGYERTWEILKEDESGSLKATIEDILFKAKRKRVFEHHGQVRLGMMRHLYVVVDGSRTMEDQDLKPNRLTCTLKLLEYFVEEYFDQNPISQIGIIVTKSKRAEKLTELSGNPRKHITSLKKAVDMTCHGEPSLYNSLSMAMQTLKHMPGHTSREVLIIFSSLTTCDPSNIYDLIKSLKAAKIRVSIIGLSAEVRVCTALARETGGTYHVILDESHYKELLTHHVSPPPASSNSECSLIRMGFPQHTIASLSDQDAKPSFSMAHLDSNTEPGLTLGGYFCPQCRAKYCELPVECKICGLTLVSAPHLARSYHHLFPLDAFQEIPLEEHNGERFCYACQGELKDQHVYVCSVCQNVFCVDCDVFVHDSLHCCPGCIHKIPVPSGI.

In terms of domain architecture, VWFA spans H60–V236. Y95 carries the post-translational modification Phosphotyrosine. The segment at C291–C308 adopts a C4-type zinc-finger fold.

The protein belongs to the GTF2H2 family. Component of the TFIID-containing RNA polymerase II pre-initiation complex that is composed of TBP and at least GTF2A1, GTF2A2, GTF2E1, GTF2E2, GTF2F1, GTF2H2, GTF2H3, GTF2H4, GTF2H5, GTF2B, TCEA1, ERCC2 and ERCC3. Component of the 7-subunit TFIIH core complex composed of XPB/ERCC3, XPD/ERCC2, GTF2H1, GTF2H2, GTF2H3, GTF2H4 and GTF2H5, which is active in NER. The core complex associates with the 3-subunit CDK-activating kinase (CAK) module composed of CCNH/cyclin H, CDK7 and MNAT1 to form the 10-subunit holoenzyme (holo-TFIIH) active in transcription. Interacts with XPB, XPD, GTF2H1 and GTF2H3.

Its subcellular location is the nucleus. Component of the general transcription and DNA repair factor IIH (TFIIH) core complex, which is involved in general and transcription-coupled nucleotide excision repair (NER) of damaged DNA and, when complexed to CAK, in RNA transcription by RNA polymerase II. In NER, TFIIH acts by opening DNA around the lesion to allow the excision of the damaged oligonucleotide and its replacement by a new DNA fragment. In transcription, TFIIH has an essential role in transcription initiation. When the pre-initiation complex (PIC) has been established, TFIIH is required for promoter opening and promoter escape. Phosphorylation of the C-terminal tail (CTD) of the largest subunit of RNA polymerase II by the kinase module CAK controls the initiation of transcription. The N-terminus of GTF2H2 interacts with and regulates XPD whereas an intact C-terminus is required for a successful escape of RNAP II form the promoter. This chain is General transcription factor IIH subunit 2 (GTF2H2), found in Bos taurus (Bovine).